The chain runs to 262 residues: tRNA (guanine-N(1)-)-methyltransferase (262 aa).

S-adenosyl-L-methionine is bound by residues glycine 112 and 132 to 137; that span reads IGDYIL.

The protein belongs to the RNA methyltransferase TrmD family. Homodimer.

Its subcellular location is the cytoplasm. It carries out the reaction guanosine(37) in tRNA + S-adenosyl-L-methionine = N(1)-methylguanosine(37) in tRNA + S-adenosyl-L-homocysteine + H(+). In terms of biological role, specifically methylates guanosine-37 in various tRNAs. The sequence is that of tRNA (guanine-N(1)-)-methyltransferase from Desulfatibacillum aliphaticivorans.